The sequence spans 75 residues: Sec-independent protein translocase protein TatA (75 aa).

A helical transmembrane segment spans residues 1–21; that stretch reads MFGLSPAQLIILLVVILLIFG.

Belongs to the TatA/E family. In terms of assembly, the Tat system comprises two distinct complexes: a TatABC complex, containing multiple copies of TatA, TatB and TatC subunits, and a separate TatA complex, containing only TatA subunits. Substrates initially bind to the TatABC complex, which probably triggers association of the separate TatA complex to form the active translocon.

It is found in the cell inner membrane. In terms of biological role, part of the twin-arginine translocation (Tat) system that transports large folded proteins containing a characteristic twin-arginine motif in their signal peptide across membranes. TatA could form the protein-conducting channel of the Tat system. The sequence is that of Sec-independent protein translocase protein TatA from Haemophilus influenzae (strain PittEE).